The chain runs to 193 residues: Ion-translocating oxidoreductase complex subunit A (193 aa).

6 helical membrane passes run 5–25 (LLLL…FLGL), 39–59 (IGMG…SYLM), 63–83 (ILIP…VIAV), 102–122 (LLGI…VALL), 134–154 (IIYG…FAAM), and 171–191 (SIAM…TGLI).

This sequence belongs to the NqrDE/RnfAE family. In terms of assembly, the complex is composed of six subunits: RnfA, RnfB, RnfC, RnfD, RnfE and RnfG.

The protein localises to the cell inner membrane. Functionally, part of a membrane-bound complex that couples electron transfer with translocation of ions across the membrane. The chain is Ion-translocating oxidoreductase complex subunit A from Aeromonas hydrophila subsp. hydrophila (strain ATCC 7966 / DSM 30187 / BCRC 13018 / CCUG 14551 / JCM 1027 / KCTC 2358 / NCIMB 9240 / NCTC 8049).